Here is a 392-residue protein sequence, read N- to C-terminus: Putative purine permease 19 (392 aa).

Over residues 1 to 16 (MGFHTKSPDRVTHEEE) the composition is skewed to basic and acidic residues. The disordered stretch occupies residues 1–29 (MGFHTKSPDRVTHEEEANIGVDNQPRETT). The residue at position 30 (serine 30) is a Phosphoserine. The next 10 membrane-spanning stretches (helical) occupy residues 46–66 (ICIFVCSCLVVAGRVLSTLLL), 88–108 (WLQSMVQNAAFPFTAFLLLLW), 128–148 (LFLLYISLGVLFAAYSQLYAI), 154–174 (VFFLWIFTSQLIFTSIFTTII), 182–202 (WIILSMVLSGAATGLGITSSG), 220–240 (WCAFFGTVAFSLSLCIMQLGF), 254–274 (VILMQTNASMIATLICLVGLF), 300–320 (LIGLSLAWQVMSLGLVGLVCL), 325–345 (FSNVVSFCSTPLVNILLVLAF), and 354–374 (FFKEGALVAGILGFASYVYSL).

Belongs to the purine permeases (TC 2.A.7.14) family.

The protein localises to the membrane. This is Putative purine permease 19 (PUP19) from Arabidopsis thaliana (Mouse-ear cress).